The following is a 162-amino-acid chain: Protein-export protein SecB (162 aa).

Belongs to the SecB family. As to quaternary structure, homotetramer, a dimer of dimers. One homotetramer interacts with 1 SecA dimer.

The protein resides in the cytoplasm. Functionally, one of the proteins required for the normal export of preproteins out of the cell cytoplasm. It is a molecular chaperone that binds to a subset of precursor proteins, maintaining them in a translocation-competent state. It also specifically binds to its receptor SecA. This Bradyrhizobium sp. (strain BTAi1 / ATCC BAA-1182) protein is Protein-export protein SecB.